A 447-amino-acid chain; its full sequence is Methyl-coenzyme M reductase II subunit beta (447 aa).

Tyr368 serves as a coordination point for coenzyme M. Gly370 is a coenzyme B binding site.

Belongs to the methyl-coenzyme M reductase beta subunit family. In terms of assembly, MCR is a hexamer of two alpha, two beta, and two gamma chains, forming a dimer of heterotrimers. Requires coenzyme F430 as cofactor.

It carries out the reaction coenzyme B + methyl-coenzyme M = methane + coenzyme M-coenzyme B heterodisulfide. It participates in one-carbon metabolism; methyl-coenzyme M reduction; methane from methyl-coenzyme M: step 1/1. In terms of biological role, component of the methyl-coenzyme M reductase (MCR) I that catalyzes the reductive cleavage of methyl-coenzyme M (CoM-S-CH3 or 2-(methylthio)ethanesulfonate) using coenzyme B (CoB or 7-mercaptoheptanoylthreonine phosphate) as reductant which results in the production of methane and the mixed heterodisulfide of CoB and CoM (CoM-S-S-CoB). This is the final step in methanogenesis. This is Methyl-coenzyme M reductase II subunit beta (mrtB) from Methanocaldococcus jannaschii (strain ATCC 43067 / DSM 2661 / JAL-1 / JCM 10045 / NBRC 100440) (Methanococcus jannaschii).